An 812-amino-acid chain; its full sequence is Ribonucleoside-diphosphate reductase large subunit (812 aa).

The ATP-cone domain maps to 12-103; the sequence is LYVIKRDGRQ…VSNLHKETKK (92 aa). Residues 16–17, 22–28, Thr64, and Asp68 contribute to the ATP site; these read KR and EEVHFDK. 2 residues coordinate GDP: Ser213 and Ser228. A disulfide bond links Cys229 and Cys455. DTTP contacts are provided by residues 237–239, Lys254, Arg267, and 274–275; these read DSI and CG. Asn438 serves as a coordination point for GDP. Asn438 functions as the Proton acceptor in the catalytic mechanism. Cys440 acts as the Cysteine radical intermediate in catalysis. Residues Glu442 and 615–618 contribute to the GDP site; that span reads TAST. Glu442 functions as the Proton acceptor in the catalytic mechanism. Thr778 carries the phosphothreonine modification. Ser782 bears the Phosphoserine mark. Position 786 is a phosphotyrosine (Tyr786).

This sequence belongs to the ribonucleoside diphosphate reductase large chain family. As to quaternary structure, heterodimer of a large and a small subunit.

The catalysed reaction is a 2'-deoxyribonucleoside 5'-diphosphate + [thioredoxin]-disulfide + H2O = a ribonucleoside 5'-diphosphate + [thioredoxin]-dithiol. With respect to regulation, under complex allosteric control mediated by deoxynucleoside triphosphates and ATP binding to separate specificity and activation sites on the M1 subunit. The type of nucleotide bound at the specificity site determines substrate preference. It seems probable that ATP makes the enzyme reduce CDP and UDP, dGTP favors ADP reduction and dTTP favors GDP reduction. Stimulated by ATP and inhibited by dATP binding to the activity site. Its function is as follows. Provides the precursors necessary for DNA synthesis. Catalyzes the biosynthesis of deoxyribonucleotides from the corresponding ribonucleotides. This Drosophila melanogaster (Fruit fly) protein is Ribonucleoside-diphosphate reductase large subunit (RnrL).